Reading from the N-terminus, the 223-residue chain is Serine/threonine/tyrosine-interacting protein B (223 aa).

Residues 28–176 (EMQEILPGLF…LQEYEAIYLA (149 aa)) enclose the Tyrosine-protein phosphatase domain.

Belongs to the protein-tyrosine phosphatase family. Non-receptor class subfamily.

Catalytically inactive phosphatase. This Xenopus laevis (African clawed frog) protein is Serine/threonine/tyrosine-interacting protein B (styx-b).